The primary structure comprises 98 residues: MIPDPRDVILRPVVSEKSYGLLDENVYTFIVRPDANKTQIKLAVQQIFNVRVLRVNTINRQGKRKRTKHGWGHRSASKRALVSLAPGDTIEIFGGPGA.

It belongs to the universal ribosomal protein uL23 family. In terms of assembly, part of the 50S ribosomal subunit. Contacts protein L29, and trigger factor when it is bound to the ribosome.

In terms of biological role, one of the early assembly proteins it binds 23S rRNA. One of the proteins that surrounds the polypeptide exit tunnel on the outside of the ribosome. Forms the main docking site for trigger factor binding to the ribosome. This is Large ribosomal subunit protein uL23 from Frankia casuarinae (strain DSM 45818 / CECT 9043 / HFP020203 / CcI3).